A 173-amino-acid polypeptide reads, in one-letter code: S-ribosylhomocysteine lyase (173 aa).

Positions 54, 58, and 128 each coordinate Fe cation.

The protein belongs to the LuxS family. In terms of assembly, homodimer. Requires Fe cation as cofactor.

It catalyses the reaction S-(5-deoxy-D-ribos-5-yl)-L-homocysteine = (S)-4,5-dihydroxypentane-2,3-dione + L-homocysteine. Involved in the synthesis of autoinducer 2 (AI-2) which is secreted by bacteria and is used to communicate both the cell density and the metabolic potential of the environment. The regulation of gene expression in response to changes in cell density is called quorum sensing. Catalyzes the transformation of S-ribosylhomocysteine (RHC) to homocysteine (HC) and 4,5-dihydroxy-2,3-pentadione (DPD). This Hydrogenovibrio crunogenus (strain DSM 25203 / XCL-2) (Thiomicrospira crunogena) protein is S-ribosylhomocysteine lyase.